Reading from the N-terminus, the 550-residue chain is Tether containing UBX domain for GLUT4 (550 aa).

A2 carries the post-translational modification N-acetylalanine. Residues 185–320 (AVRSKAPGSP…EPPVDRDPVV (136 aa)) are disordered. S193 carries the post-translational modification Phosphoserine. Residues 193 to 206 (SPVSSLSADQASSS) are compositionally biased toward low complexity. The segment covering 217-226 (SRGDLNHEGD) has biased composition (basic and acidic residues). The segment covering 242–252 (DAQTKQSTSEP) has biased composition (polar residues). An interaction with GLUT4 region spans residues 313–376 (PVDRDPVVYH…LVTKAFREAQ (64 aa)). In terms of domain architecture, UBX spans 382–458 (ERYPKVALRV…NLFPAALVHF (77 aa)). Residue S496 is modified to Phosphoserine. The segment at 496–550 (SPPLLPAPDPVSLESEPIAEDGALGPPEPIQGTAQPVKRSLGKVPKWLKLPASKR) is disordered.

Interacts with VCP. Interacts with VCPKMT. Interacts with GLUT4. In terms of tissue distribution, ubiquitous.

The protein localises to the endomembrane system. It is found in the endoplasmic reticulum-Golgi intermediate compartment membrane. The protein resides in the cytoplasm. It localises to the nucleus. Its function is as follows. Enhances VCP methylation catalyzed by VCPKMT. Tethering protein that sequesters GLUT4-containing vesicles in the cytoplasm in the absence of insulin. Modulates the amount of GLUT4 that is available at the cell surface. The polypeptide is Tether containing UBX domain for GLUT4 (Aspscr1) (Mus musculus (Mouse)).